The chain runs to 661 residues: Glycogen debranching enzyme (661 aa).

D338 (nucleophile) is an active-site residue. The active-site Proton donor is E373. Residues 460-481 (NQLNGEGNRDGSDRNFSNNHGV) are disordered.

The protein belongs to the glycosyl hydrolase 13 family.

It carries out the reaction Hydrolysis of (1-&gt;6)-alpha-D-glucosidic linkages to branches with degrees of polymerization of three or four glucose residues in limit dextrin.. The protein operates within glycan degradation; glycogen degradation. In terms of biological role, removes maltotriose and maltotetraose chains that are attached by 1,6-alpha-linkage to the limit dextrin main chain, generating a debranched limit dextrin. In Serratia proteamaculans (strain 568), this protein is Glycogen debranching enzyme.